The following is a 95-amino-acid chain: Beta-alanine degradation protein BauB (95 aa).

The region spanning 23–90 (WRFAPGAETG…NASAHEVVFV (68 aa)) is the Cupin type-2 domain.

Its function is as follows. Involved in the degradation of beta-alanine. In Pseudomonas aeruginosa (strain ATCC 15692 / DSM 22644 / CIP 104116 / JCM 14847 / LMG 12228 / 1C / PRS 101 / PAO1), this protein is Beta-alanine degradation protein BauB (bauB).